Reading from the N-terminus, the 105-residue chain is Large ribosomal subunit protein uL24 (105 aa).

Belongs to the universal ribosomal protein uL24 family. In terms of assembly, part of the 50S ribosomal subunit.

Functionally, one of two assembly initiator proteins, it binds directly to the 5'-end of the 23S rRNA, where it nucleates assembly of the 50S subunit. In terms of biological role, one of the proteins that surrounds the polypeptide exit tunnel on the outside of the subunit. The protein is Large ribosomal subunit protein uL24 of Francisella philomiragia subsp. philomiragia (strain ATCC 25017 / CCUG 19701 / FSC 153 / O#319-036).